We begin with the raw amino-acid sequence, 444 residues long: Glutamate--methylamine ligase (444 aa).

The region spanning 14–97 (HHVKYVLAQF…LVCDGHVNGK (84 aa)) is the GS beta-grasp domain. In terms of domain architecture, GS catalytic spans 103 to 444 (TRVVLKQQIA…WEINRYVQFY (342 aa)).

It belongs to the glutamine synthetase family. Type 3 subfamily. Mg(2+) serves as cofactor.

It carries out the reaction methylamine + L-glutamate + ATP = N(5)-methyl-L-glutamine + ADP + phosphate + H(+). It catalyses the reaction ethylamine + L-glutamate + ATP = N(5)-ethyl-L-glutamine + ADP + phosphate + H(+). Its activity is regulated as follows. Formation of theanine is repressed by a high concentration of glutamic acid. In terms of biological role, catalyzes the formation of N(5)-methyl-L-glutamine from glutamate and methylamine. In vitro, can also use ethylamine, hydroxylamine and ammonia, with 75%, 40% and 1% activity compared to methylamine, respectively. The chain is Glutamate--methylamine ligase from Methylovorus mays.